Reading from the N-terminus, the 739-residue chain is Polyribonucleotide nucleotidyltransferase (739 aa).

Asp514 and Asp520 together coordinate Mg(2+). Residues Pro580–Ile639 enclose the KH domain. The 73-residue stretch at Gly651–Val723 folds into the S1 motif domain.

The protein belongs to the polyribonucleotide nucleotidyltransferase family. Requires Mg(2+) as cofactor.

The protein resides in the cytoplasm. The catalysed reaction is RNA(n+1) + phosphate = RNA(n) + a ribonucleoside 5'-diphosphate. Its function is as follows. Involved in mRNA degradation. Catalyzes the phosphorolysis of single-stranded polyribonucleotides processively in the 3'- to 5'-direction. In Streptomyces coelicolor (strain ATCC BAA-471 / A3(2) / M145), this protein is Polyribonucleotide nucleotidyltransferase.